A 316-amino-acid chain; its full sequence is Probable cell division protein WhiA (316 aa).

The segment at residues 275 to 309 is a DNA-binding region (H-T-H motif); sequence TLKELGEMVSGGKISKSGINHRLRKIDEIAEKLRA.

The protein belongs to the WhiA family.

Involved in cell division and chromosome segregation. This Bacillus cereus (strain B4264) protein is Probable cell division protein WhiA.